The sequence spans 402 residues: Putative polyketide beta-ketoacyl synthase 2 (402 aa).

Disordered stretches follow at residues 1–30 (MTPV…WAPR) and 188–222 (VEPR…FDRD). Residues 1 to 400 (MTPVAVTGMG…GFNSALVVRA (400 aa)) enclose the Ketosynthase family 3 (KS3) domain. The span at 192 to 205 (SAPGAGSPSSPAGG) shows a compositional bias: low complexity.

The protein belongs to the thiolase-like superfamily. Beta-ketoacyl-ACP synthases family.

The protein operates within antifungal biosynthesis; monensin biosynthesis. This chain is Putative polyketide beta-ketoacyl synthase 2, found in Streptomyces virginiae (Streptomyces cinnamonensis).